The sequence spans 346 residues: MPKIDPETQKLYDEINGMIQKFKDDQKSKADCTLADKCGDMGDVPKIRFSSKKILKGHINKVNSVHFAGDSRHCVTGSLDGKLIIWDTWTANKVQIIPLRSAWVMTVAFSPSGNFVACGGMDNQCTVYDVNNRDASGVAKMVKELMGYEGFLSSCRFLDDGHLITGSGDMKICHWDLEKGVKTMDFNGHAGDIAGLSLSPDMKTYITGSVDKTAKLWDVREEGHKQMFFGHDMDVSSVCYHPSGFGFASCSEDQTARMYDLRADQQIAQYEPPQKNTGFTSCALSTSGRYLMCGGIEGNVHSWDTMKQRHTGTLSGHENRITCISLCPNGMCLASTSWDQQVRLWL.

7 WD repeats span residues 57–96, 99–138, 147–185, 188–227, 230–269, 274–313, and 316–346; these read GHIN…KVQI, LRSA…ASGV, GYEG…KTMD, GHAG…HKQM, GHDM…QIAQ, QKNT…HTGT, and GHEN…RLWL.

This sequence belongs to the WD repeat G protein beta family. In terms of assembly, g proteins are composed of 3 units, alpha, beta and gamma. Interacts with Ggamma30A/Guanine nucleotide-binding protein subunit gamma-e. As to expression, expressed exclusively in photoreceptor cells in the compound eye (at protein level).

The protein localises to the cytoplasm. Its subcellular location is the cell projection. It localises to the axon. The protein resides in the rhabdomere. Guanine nucleotide-binding proteins (G proteins) are involved as a modulator or transducer in various transmembrane signaling systems. The beta and gamma chains are required for the GTPase activity, for replacement of GDP by GTP, and for G protein-effector interaction. This chain is Guanine nucleotide-binding protein subunit beta-2 (Gbeta76C), found in Drosophila melanogaster (Fruit fly).